The primary structure comprises 184 residues: NADH-quinone oxidoreductase subunit B (184 aa).

[4Fe-4S] cluster-binding residues include Cys37, Cys38, Cys103, and Cys132.

It belongs to the complex I 20 kDa subunit family. NDH-1 is composed of 14 different subunits. Subunits NuoB, C, D, E, F, and G constitute the peripheral sector of the complex. [4Fe-4S] cluster is required as a cofactor.

It is found in the cell membrane. It catalyses the reaction a quinone + NADH + 5 H(+)(in) = a quinol + NAD(+) + 4 H(+)(out). Its function is as follows. NDH-1 shuttles electrons from NADH, via FMN and iron-sulfur (Fe-S) centers, to quinones in the respiratory chain. The immediate electron acceptor for the enzyme in this species is believed to be a menaquinone. Couples the redox reaction to proton translocation (for every two electrons transferred, four hydrogen ions are translocated across the cytoplasmic membrane), and thus conserves the redox energy in a proton gradient. This Beutenbergia cavernae (strain ATCC BAA-8 / DSM 12333 / CCUG 43141 / JCM 11478 / NBRC 16432 / NCIMB 13614 / HKI 0122) protein is NADH-quinone oxidoreductase subunit B.